A 497-amino-acid chain; its full sequence is Vacuolar fusion protein CCZ1 homolog B (497 aa).

The interval 244–284 (GTSSWSYLRKGSGSPQISSRSTTVPPLGSGGTLPSGNGSST) is disordered.

Belongs to the CCZ1 family. As to quaternary structure, interacts with MON1.

It localises to the endosome. Its subcellular location is the prevacuolar compartment. Its function is as follows. Plays an important role in membrane trafficking through the secretory apparatus. In complex with MON1, acts as a guanine exchange factor (GEF) for RABG3F of the RAB7 protein family. Promotes the exchange of GDP to GTP, converting RABG3F from an inactive GDP-bound form into an active GTP-bound form. The RABG3F active form is involved in protein trafficking from prevacuolar compartments (PVCs) to vacuoles. May serve as a linker between Rab5 and Rab7 protein families in PVCs and mediate PVC maturation. This Arabidopsis thaliana (Mouse-ear cress) protein is Vacuolar fusion protein CCZ1 homolog B.